The sequence spans 676 residues: MGVTGILQLPRDRFKRTSFFLWVIILFQRTFSIPLGVIHNSTLQVSDVDKLVCRDKLSSTNQLRSVGLNLEGNGVATDVPSATKRWGFRSGVPPKVVNYEAGEWAENCYNLEIKKPDGSECLPAAPDGIRGFPRCRYVHKVSGTGPCAGDFAFHKEGAFFLYDRLASTVIYRGTTFAEGVVAFLILPQAKKDFFSSHPLREPVNATEDPSSGYYSTTIRYQATGFGTNETEYLFEVDNLTYVQLESRFTPQFLLQLNETIYTSGKRSNTTGKLIWKVNPEIDTTIGEWAFWETKKNLTRKIRSEELSFTVVSNGAKNISGQSPARTSSDPGTNTTTEDHKIMASENSSAMVQVHSQGREAAVSHLTTLATISTSPQSLTTKPGPDNSTHNTPVYKLDISEATQVEQHHRRTDNDSTASDTPSATTAAGPPKAENTNTSKSTDFLDPATTTSPQNHSETAGNNNTHHQDTGEESASSGKLGLITNTIAGVAGLITGGRRTRREAIVNAQPKCNPNLHYWTTQDEGAAIGLAWIPYFGPAAEGIYIEGLMHNQDGLICGLRQLANETTQALQLFLRATTELRTFSILNRKAIDFLLQRWGGTCHILGPDCCIEPHDWTKNITDKIDQIIHDFVDKTLPDQGDNDNWWTGWRQWIPAGIGVTGVIIAVIALFCICKFVF.

Positions 1 to 32 are cleaved as a signal peptide; the sequence is MGVTGILQLPRDRFKRTSFFLWVIILFQRTFS. The Extracellular segment spans residues 33-650; sequence IPLGVIHNST…NDNWWTGWRQ (618 aa). N40 carries an N-linked (GlcNAc...) asparagine; by host glycan. Cystine bridges form between C53-C609, C108-C135, C121-C147, C511-C556, and C601-C608. Residues 54–201 are receptor-binding; that stretch reads RDKLSSTNQL…DFFSSHPLRE (148 aa). 11 N-linked (GlcNAc...) asparagine; by host glycosylation sites follow: N204, N228, N238, N257, N268, N296, N317, N333, N346, N386, and N413. Residues 305 to 485 are mucin-like region; sequence ELSFTVVSNG…SGKLGLITNT (181 aa). Residues 315–335 show a composition bias toward polar residues; that stretch reads AKNISGQSPARTSSDPGTNTT. A disordered region spans residues 315 to 337; the sequence is AKNISGQSPARTSSDPGTNTTTE. A compositionally biased stretch (polar residues) spans 373 to 391; the sequence is TSPQSLTTKPGPDNSTHNT. 2 disordered regions span residues 373-392 and 402-479; these read TSPQSLTTKPGPDNSTHNTP and TQVE…SGKL. A compositionally biased stretch (low complexity) spans 414–432; sequence DSTASDTPSATTAAGPPKA. Polar residues predominate over residues 433-464; it reads ENTNTSKSTDFLDPATTTSPQNHSETAGNNNT. N-linked (GlcNAc...) asparagine; by host glycans are attached at residues N436, N454, and N462. The interval 524–539 is fusion peptide; that stretch reads GAAIGLAWIPYFGPAA. Positions 554 to 595 form a coiled coil; that stretch reads LICGLRQLANETTQALQLFLRATTELRTFSILNRKAIDFLLQ. N563 is a glycosylation site (N-linked (GlcNAc...) asparagine; by host). A coiled-coil region spans residues 615-634; the sequence is WTKNITDKIDQIIHDFVDKT. The N-linked (GlcNAc...) asparagine; by host glycan is linked to N618. The chain crosses the membrane as a helical span at residues 651–671; it reads WIPAGIGVTGVIIAVIALFCI. The Important role for host BST2/tetherin antagonism motif lies at 660–664; that stretch reads GVIIA. S-palmitoyl cysteine; by host attachment occurs at residues C670 and C672. Topologically, residues 672–676 are cytoplasmic; it reads CKFVF.

Belongs to the filoviruses glycoprotein family. In terms of assembly, homotrimer; each monomer consists of a GP1 and a GP2 subunit linked by disulfide bonds. The resulting peplomers (GP1,2) protrude from the virus surface as spikes. Interacts with host integrin alpha-V/ITGAV. Interacts with host CLEC10A. Also binds to host CD209 and CLEC4M/DC-SIGN(R). Interacts with host FOLR1. Interacts with BST2; this interaction inhibits the antiviral effect of BST2 and this allows viral release from infected cells. Interacts with host FCN1; this interaction enhances viral entry. Interacts with host TLR4; this interaction induces cell death in T-lymphocytes or proinflammatory cytokines and SOCS1 production in monocytes. As to quaternary structure, interacts with host entry receptor NPC1. GP1 and GP2delta are part of GP1,2delta soluble complexes released by ectodomain shedding. In terms of processing, the signal peptide region modulates GP's high mannose glycosylation, thereby determining the efficiency of the interactions with DC-SIGN(R). N-glycosylated. Post-translationally, glycosylated; glycosylation is essential for the activation of dendritic cells and macrophages. In terms of processing, O-glycosylated in the mucin-like region. Palmitoylation is not required for its function. Post-translationally, specific enzymatic cleavages in vivo yield mature proteins. The precursor is processed into GP1 and GP2 by host cell furin in the trans Golgi, and maybe by other host proteases, to yield the mature GP1 and GP2 proteins. The cleavage site corresponds to the furin optimal cleavage sequence [KR]-X-[KR]-R. This cleavage does not seem to be required for function. After the internalization of the virus into cell endosomes, GP1 C-terminus is removed by the endosomal proteases cathepsin B, cathepsin L, or both, leaving a 19-kDa N-terminal fragment which is further digested by cathepsin B. This cleaved 19-kDa GP1 can then bind to the host entry receptor NPC1. Proteolytic processing of GP1,2 by host ADAM17 can remove the transmembrane anchor of GP2 and leads to shedding of complexes consisting in GP1 and truncated GP2 (GP1,2delta).

Its subcellular location is the virion membrane. It localises to the host cell membrane. It is found in the secreted. Trimeric GP1,2 complexes form the virion surface spikes and mediate the viral entry processes, with GP1 acting as the receptor-binding subunit and GP2 as the membrane fusion subunit. At later times of infection, down-regulates the expression of various host cell surface molecules that are essential for immune surveillance and cell adhesion. Down-modulates several integrins including ITGA1, ITGA2, ITGA3, ITGA4, ITGA5, ITGA6, ITGAV and ITGB1. This decrease in cell adhesion molecules may lead to cell detachment, contributing to the disruption of blood vessel integrity and hemorrhages developed during infection (cytotoxicity). Interacts with host TLR4 and thereby stimulates the differentiation and activation of monocytes leading to bystander death of T-lymphocytes. Down-regulates as well the function of host natural killer cells. Counteracts the antiviral effect of host BST2/tetherin that restricts release of progeny virions from infected cells. However, cooperates with VP40 and host BST2 to activate canonical NF-kappa-B pathway in a manner dependent on neddylation. Functionally, functions as a decoy for anti-GP1,2 antibodies thereby contributing to viral immune evasion. Interacts and activates host macrophages and dendritic cells inducing up-regulation of cytokine transcription. This effect is mediated throught activation of host TLR4. In terms of biological role, responsible for binding to the receptor(s) on target cells. Interacts with CD209/DC-SIGN and CLEC4M/DC-SIGNR which act as cofactors for virus entry into dendritic cells (DCs) and endothelial cells. Binding to the macrophage specific lectin CLEC10A also seems to enhance virus infectivity. Interaction with FOLR1/folate receptor alpha may be a cofactor for virus entry in some cell types, although results are contradictory. Members of the Tyro3 receptor tyrosine kinase family also seem to be cell entry factors in filovirus infection. Once attached, the virions are internalized through clathrin-dependent endocytosis and/or macropinocytosis. After internalization of the virus into the endosomes of the host cell, proteolysis of GP1 by two cysteine proteases, CTSB/cathepsin B and CTSL/cathepsin L removes the glycan cap and allows GP1 binding to the host entry receptor NPC1. NPC1-binding, Ca(2+) and acidic pH induce a conformational change of GP2, which unmasks its fusion peptide and permit membranes fusion. Its function is as follows. Acts as a class I viral fusion protein. Under the current model, the protein has at least 3 conformational states: pre-fusion native state, pre-hairpin intermediate state, and post-fusion hairpin state. During viral and target cell membrane fusion, the coiled coil regions (heptad repeats) assume a trimer-of-hairpins structure, positioning the fusion peptide in close proximity to the C-terminal region of the ectodomain. The formation of this structure appears to drive apposition and subsequent fusion of viral and target cell membranes. Responsible for penetration of the virus into the cell cytoplasm by mediating the fusion of the membrane of the endocytosed virus particle with the endosomal membrane. Low pH in endosomes induces an irreversible conformational change in GP2, releasing the fusion hydrophobic peptide. This chain is Envelope glycoprotein (GP), found in Epomops franqueti (Franquet's epauletted fruit bat).